Reading from the N-terminus, the 697-residue chain is MPKPASMAMNTTKSTTPAHVISPANIEWQTDDAGNEVPVSGEFGDAYFSQADGLAESHHVFLAHNQLPTRLANLIPKQCFTIYELGFGTGLNLLATWQLWRQLRLTHPHLASARLHFITTEKHPVPFSDLAKILAPLGQRTPELALLIEQLLTSYPPLIAGCHRLDFIDDNLTLDIWLGDANDSLASLDSTVATQRPYINAWFLDGFAPSCNEILWTERIFSHMQRLSRAGTTAATYSCAGIIKRGLQSQGFVIKKSKVLGSKREMLTAVMSEMSSLDKPISTLSNKVTLSNYPNNAVVIGAGVAGLLTAWSLANRGISVTVLDKDAPLAGASGNPRALLAPNMTPIHHVYEHLHSIGYLYSGRLYRYFNQQAAIQKSPLILEQTGTLDLLVKTNIGTEQILDYPDTMATTISPEKAQDISGLKDKDLAHNLYMPQAGLVNPQALQTVILAHPNITYQQLNIINIKETENSIILTGSKEDENASQASLTITADHVVICAAYESHQLDKRIVKCRTIRGQLSWFTPTAQQLTQLPKLPLKYSGYCAPFIGQSGDAELNHISENQPQFLLGASFIDGDTNIDVRDEENQQNYDKLIEDMPELSSVLPNDISTWHARAGIRTQTMDYHPLVGLLAQSQRLWSMSAMGAKGYAIAPICAEALADMMLGCFTPLSAAMLARLSPNRARLHKVHKHKTRQAVI.

The tRNA (mnm(5)s(2)U34)-methyltransferase stretch occupies residues 1–272 (MPKPASMAMN…KREMLTAVMS (272 aa)). The interval 300 to 697 (IGAGVAGLLT…HKHKTRQAVI (398 aa)) is FAD-dependent cmnm(5)s(2)U34 oxidoreductase.

This sequence in the N-terminal section; belongs to the methyltransferase superfamily. tRNA (mnm(5)s(2)U34)-methyltransferase family. The protein in the C-terminal section; belongs to the DAO family. FAD serves as cofactor.

The protein resides in the cytoplasm. It carries out the reaction 5-aminomethyl-2-thiouridine(34) in tRNA + S-adenosyl-L-methionine = 5-methylaminomethyl-2-thiouridine(34) in tRNA + S-adenosyl-L-homocysteine + H(+). Its function is as follows. Catalyzes the last two steps in the biosynthesis of 5-methylaminomethyl-2-thiouridine (mnm(5)s(2)U) at the wobble position (U34) in tRNA. Catalyzes the FAD-dependent demodification of cmnm(5)s(2)U34 to nm(5)s(2)U34, followed by the transfer of a methyl group from S-adenosyl-L-methionine to nm(5)s(2)U34, to form mnm(5)s(2)U34. The chain is tRNA 5-methylaminomethyl-2-thiouridine biosynthesis bifunctional protein MnmC from Psychrobacter cryohalolentis (strain ATCC BAA-1226 / DSM 17306 / VKM B-2378 / K5).